Here is a 296-residue protein sequence, read N- to C-terminus: 4-hydroxybenzoate octaprenyltransferase (296 aa).

A run of 8 helical transmembrane segments spans residues 29 to 49, 55 to 75, 102 to 122, 146 to 166, 169 to 189, 219 to 239, 241 to 261, and 275 to 295; these read IGIYLLLWPTLWSLWIAADGV, LLIFVLGVILMRAAGCVINDF, AWITFAVLVALSFGLVLLTNA, YYPQVVLGAAYSWGILMAFTA, GELPASAWLLFLANVLWTVAY, LIIGSLQGLTLLLLVLAGNRF, LGLCFYLGLAVAAACFVWEAW, and FLHNHWAGLAIFLGTVADYAL.

The protein belongs to the UbiA prenyltransferase family. Requires Mg(2+) as cofactor.

It is found in the cell inner membrane. The enzyme catalyses all-trans-octaprenyl diphosphate + 4-hydroxybenzoate = 4-hydroxy-3-(all-trans-octaprenyl)benzoate + diphosphate. Its pathway is cofactor biosynthesis; ubiquinone biosynthesis. In terms of biological role, catalyzes the prenylation of para-hydroxybenzoate (PHB) with an all-trans polyprenyl group. Mediates the second step in the final reaction sequence of ubiquinone-8 (UQ-8) biosynthesis, which is the condensation of the polyisoprenoid side chain with PHB, generating the first membrane-bound Q intermediate 3-octaprenyl-4-hydroxybenzoate. The sequence is that of 4-hydroxybenzoate octaprenyltransferase from Pseudomonas aeruginosa (strain LESB58).